Here is a 304-residue protein sequence, read N- to C-terminus: Glutaminase (304 aa).

Residues S63, N113, E157, N164, Y188, Y240, and V258 each contribute to the substrate site.

This sequence belongs to the glutaminase family. Homotetramer.

The enzyme catalyses L-glutamine + H2O = L-glutamate + NH4(+). The polypeptide is Glutaminase (Paraburkholderia phytofirmans (strain DSM 17436 / LMG 22146 / PsJN) (Burkholderia phytofirmans)).